The primary structure comprises 407 residues: Imidazolonepropionase (407 aa).

Residues His-75 and His-77 each contribute to the Fe(3+) site. 2 residues coordinate Zn(2+): His-75 and His-77. Positions 84, 147, and 180 each coordinate 4-imidazolone-5-propanoate. An N-formimidoyl-L-glutamate-binding site is contributed by Tyr-147. His-245 lines the Fe(3+) pocket. Residue His-245 coordinates Zn(2+). Gln-248 is a binding site for 4-imidazolone-5-propanoate. Asp-320 serves as a coordination point for Fe(3+). Asp-320 contacts Zn(2+). Residues Asn-322 and Gly-324 each coordinate N-formimidoyl-L-glutamate. Ser-325 lines the 4-imidazolone-5-propanoate pocket.

Belongs to the metallo-dependent hydrolases superfamily. HutI family. Zn(2+) serves as cofactor. The cofactor is Fe(3+).

The protein localises to the cytoplasm. It catalyses the reaction 4-imidazolone-5-propanoate + H2O = N-formimidoyl-L-glutamate. The protein operates within amino-acid degradation; L-histidine degradation into L-glutamate; N-formimidoyl-L-glutamate from L-histidine: step 3/3. In terms of biological role, catalyzes the hydrolytic cleavage of the carbon-nitrogen bond in imidazolone-5-propanoate to yield N-formimidoyl-L-glutamate. It is the third step in the universal histidine degradation pathway. The sequence is that of Imidazolonepropionase from Pseudoalteromonas atlantica (strain T6c / ATCC BAA-1087).